Reading from the N-terminus, the 447-residue chain is Rab GDP dissociation inhibitor alpha (447 aa).

Serine 427 carries the post-translational modification Phosphoserine.

Belongs to the Rab GDI family. In terms of assembly, interacts with RHOH. Interacts with the non-phosphorylated forms of RAB1A, RAB3A, RAB5A, RAB5B, RAB5C, RAB8A, RAB8B, RAB10, RAB12, RAB35, and RAB43.

The protein resides in the cytoplasm. It localises to the golgi apparatus. Its subcellular location is the trans-Golgi network. Regulates the GDP/GTP exchange reaction of most Rab proteins by inhibiting the dissociation of GDP from them, and the subsequent binding of GTP to them. Promotes the dissociation of GDP-bound Rab proteins from the membrane and inhibits their activation. Promotes the dissociation of RAB1A, RAB3A, RAB5A and RAB10 from membranes. The protein is Rab GDP dissociation inhibitor alpha (GDI1) of Canis lupus familiaris (Dog).